The following is a 423-amino-acid chain: Tubulin beta-2 chain (423 aa).

The GTP site is built by glutamate 44, serine 113, glycine 117, threonine 118, glycine 119, asparagine 179, and asparagine 201. Glutamate 44 contacts Mg(2+). The tract at residues 394–423 is disordered; that stretch reads VSEYQQYQDATAEEEGEYDEDEDDEGGDYA. Over residues 404–423 the composition is skewed to acidic residues; that stretch reads TAEEEGEYDEDEDDEGGDYA.

It belongs to the tubulin family. Dimer of alpha and beta chains. A typical microtubule is a hollow water-filled tube with an outer diameter of 25 nm and an inner diameter of 15 nM. Alpha-beta heterodimers associate head-to-tail to form protofilaments running lengthwise along the microtubule wall with the beta-tubulin subunit facing the microtubule plus end conferring a structural polarity. Microtubules usually have 13 protofilaments but different protofilament numbers can be found in some organisms and specialized cells. The cofactor is Mg(2+).

Its subcellular location is the cytoplasm. The protein localises to the cytoskeleton. Its function is as follows. Tubulin is the major constituent of microtubules, a cylinder consisting of laterally associated linear protofilaments composed of alpha- and beta-tubulin heterodimers. Microtubules grow by the addition of GTP-tubulin dimers to the microtubule end, where a stabilizing cap forms. Below the cap, tubulin dimers are in GDP-bound state, owing to GTPase activity of alpha-tubulin. This is Tubulin beta-2 chain (TUBB2) from Oomycete-like sp. (strain MacKay2000).